Consider the following 171-residue polypeptide: Co-chaperone protein HscB (171 aa).

Residues 2–74 (DYFTLFGLPA…LTRAEYLLSL (73 aa)) form the J domain.

It belongs to the HscB family. As to quaternary structure, interacts with HscA and stimulates its ATPase activity. Interacts with IscU.

In terms of biological role, co-chaperone involved in the maturation of iron-sulfur cluster-containing proteins. Seems to help targeting proteins to be folded toward HscA. The chain is Co-chaperone protein HscB from Citrobacter koseri (strain ATCC BAA-895 / CDC 4225-83 / SGSC4696).